A 416-amino-acid chain; its full sequence is Formyl-CoA:oxalate CoA-transferase (416 aa).

Residues 17–18, Arg38, 72–75, 96–98, His104, and 137–140 contribute to the CoA site; these read QS, LNTK, NFH, and KAYE. Asp169 serves as the catalytic Nucleophile. 248 to 250 contacts substrate; that stretch reads GGQ. A CoA-binding site is contributed by 273–275; that stretch reads QEQ.

It belongs to the CoA-transferase III family. Frc subfamily. Homodimer.

It carries out the reaction formyl-CoA + oxalate = oxalyl-CoA + formate. The protein operates within metabolic intermediate degradation; oxalate degradation; CO(2) and formate from oxalate: step 1/2. Its function is as follows. Involved in the catabolism of oxalate and in the adapatation to low pH via the induction of the oxalate-dependent acid tolerance response (ATR). Catalyzes the transfer of the CoA moiety from formyl-CoA to oxalate. This chain is Formyl-CoA:oxalate CoA-transferase, found in Shigella boydii serotype 18 (strain CDC 3083-94 / BS512).